The sequence spans 718 residues: Protein spire homolog 2 (718 aa).

Disordered stretches follow at residues 1–22 and 143–166; these read MARAGGGGAAAPERAGGAARPE and DSSCGAADEGYVGPEEEEEAEGGP. A compositionally biased stretch (low complexity) spans 10-21; that stretch reads AAPERAGGAARP. Residues 26-207 form the KIND domain; it reads LSLEEVLKVY…RALFVETLEL (182 aa). WH2 domains follow at residues 251 to 265, 281 to 299, and 345 to 362; these read QLMRELRHGVKLKKV, PFEMLMQDIRARNYKLRKV, and LHEKILEEIKQERRLRPV. Phosphoserine is present on Ser374. Residues 397-434 are disordered; the sequence is TDTGSGSQRPRPRVLLKAPTLAEMEEMNTSEEEESPCG. Over residues 419-432 the composition is skewed to acidic residues; the sequence is EMEEMNTSEEEESP. A phosphoserine mark is found at Ser443, Ser445, and Ser479. The disordered stretch occupies residues 456-518; it reads MASGLQSAAQ…SSLSSVDGPE (63 aa). Residues 496 to 513 are compositionally biased toward low complexity; the sequence is SGQSQPLPSSALPSSLSS. The spir-box stretch occupies residues 538-558; that stretch reads LALTVEEVVDVRRVLVKAEME.

The protein belongs to the spire family. Detected in oocytes.

Its subcellular location is the cytoplasm. The protein resides in the cytoskeleton. The protein localises to the cytosol. It localises to the cell membrane. It is found in the cytoplasmic vesicle membrane. Acts as an actin nucleation factor, remains associated with the slow-growing pointed end of the new filament. Involved in intracellular vesicle transport along actin fibers, providing a novel link between actin cytoskeleton dynamics and intracellular transport. Required for asymmetric spindle positioning and asymmetric cell division during oocyte meiosis. Required for normal formation of the cleavage furrow and for polar body extrusion during female germ cell meiosis. Also acts in the nucleus: together with SPIRE1 and SPIRE2, promotes assembly of nuclear actin filaments in response to DNA damage in order to facilitate movement of chromatin and repair factors after DNA damage. The protein is Protein spire homolog 2 (Spire2) of Mus musculus (Mouse).